The chain runs to 100 residues: Integration host factor subunit alpha (100 aa).

A disordered region spans residues 53-73; sequence FDLRDKRQRPGRNPKTGEEIP.

The protein belongs to the bacterial histone-like protein family. In terms of assembly, heterodimer of an alpha and a beta chain.

This protein is one of the two subunits of integration host factor, a specific DNA-binding protein that functions in genetic recombination as well as in transcriptional and translational control. This is Integration host factor subunit alpha from Pseudomonas aeruginosa (strain LESB58).